A 689-amino-acid polypeptide reads, in one-letter code: Glycine--tRNA ligase beta subunit (689 aa).

The protein belongs to the class-II aminoacyl-tRNA synthetase family. Tetramer of two alpha and two beta subunits.

The protein localises to the cytoplasm. The catalysed reaction is tRNA(Gly) + glycine + ATP = glycyl-tRNA(Gly) + AMP + diphosphate. The sequence is that of Glycine--tRNA ligase beta subunit from Shewanella amazonensis (strain ATCC BAA-1098 / SB2B).